A 305-amino-acid polypeptide reads, in one-letter code: Translation initiation factor eIF2B subunit alpha (305 aa).

It belongs to the eIF-2B alpha/beta/delta subunits family. Component of the translation initiation factor 2B (eIF2B) complex which is a heterodecamer of two sets of five different subunits: alpha, beta, gamma, delta and epsilon. Subunits alpha, beta and delta comprise a regulatory subcomplex and subunits epsilon and gamma comprise a catalytic subcomplex. Within the complex, the hexameric regulatory complex resides at the center, with the two heterodimeric catalytic subcomplexes bound on opposite sides.

The protein localises to the cytoplasm. It localises to the cytosol. With respect to regulation, activated by the chemical integrated stress response (ISR) inhibitor ISRIB which stimulates guanine nucleotide exchange factor activity for both phosphorylated and unphosphorylated eIF2. Its function is as follows. Acts as a component of the translation initiation factor 2B (eIF2B) complex, which catalyzes the exchange of GDP for GTP on eukaryotic initiation factor 2 (eIF2) gamma subunit. Its guanine nucleotide exchange factor activity is repressed when bound to eIF2 complex phosphorylated on the alpha subunit, thereby limiting the amount of methionyl-initiator methionine tRNA available to the ribosome and consequently global translation is repressed. The chain is Translation initiation factor eIF2B subunit alpha (EIF2B1) from Bos taurus (Bovine).